The following is a 131-amino-acid chain: MTAKTEEILESLKSLSLLEASELVKQIEEAFGVSAAASAGVVMAAPGAAGGDGDGGAAEEKTEFDVILESFDAAAKIKVLKVVRNATGLGLGDAKALVESAPKTVKEGIAKADAETLKKEIEEAGGKVTLK.

Belongs to the bacterial ribosomal protein bL12 family. Homodimer. Part of the ribosomal stalk of the 50S ribosomal subunit. Forms a multimeric L10(L12)X complex, where L10 forms an elongated spine to which 2 to 4 L12 dimers bind in a sequential fashion. Binds GTP-bound translation factors.

Functionally, forms part of the ribosomal stalk which helps the ribosome interact with GTP-bound translation factors. Is thus essential for accurate translation. The protein is Large ribosomal subunit protein bL12 of Prochlorococcus marinus (strain MIT 9515).